Here is a 435-residue protein sequence, read N- to C-terminus: Beta-arrestin arr-1 (435 aa).

The tract at residues 358-382 (LTHSKPPESPERTDRGLPSIEATNG) is disordered. Residues 362–372 (KPPESPERTDR) show a composition bias toward basic and acidic residues. Residues 390–394 (LIQLH) carry the Clathrin box motif. The short motif at 404–414 (DLIFEDFARMR) is the [DE]-X(1,2)-F-X-X-[FL]-X-X-X-R motif element. Positions 416-435 (HGNDSEDQPSPSANLPPSLL) are disordered. The span at 424-435 (PSPSANLPPSLL) shows a compositional bias: low complexity.

It belongs to the arrestin family. Component of a complex composed of arr-1, daf-18 and mpz-1. Within the complex, interacts (via C-terminus) with mpz-1 (via PDZ domain) and phosphatase daf-18. May interact (via C-terminus) with clathrin chc-1 and beta-2 adaptin (AP2) apb-1. Expressed in head neurons, nerve ring and ventral nerve cord (at protein level). Expressed in the nervous system including the nerve ring and the ventral and dorsal nerve cords. Highly expressed in amphid chemosensory neurons AWA, AWB, AWC, ADL and ASH, and in hermaphrodite specific neuron HSN. Also expressed in the intestine.

The protein resides in the perikaryon. It is found in the cell projection. It localises to the dendrite. In terms of biological role, adapter protein required for olfactory adaptation and recovery to volatile odorants, probably by desensitization of G-protein coupled receptors (GPCR). May play a role in clathrin-mediated GPCR endocytosis. Acts as a positive regulator of insulin-like daf-2 signaling pathway probably by forming a complex with mpz-1 and phosphatase daf-18 likely resulting in daf-18 inhibition. Involved in egg-laying. This Caenorhabditis elegans protein is Beta-arrestin arr-1.